We begin with the raw amino-acid sequence, 453 residues long: Ribulose bisphosphate carboxylase large chain (453 aa).

The propeptide occupies 1-2 (MS). P3 is modified (N-acetylproline). K14 carries the post-translational modification N6,N6,N6-trimethyllysine. Substrate-binding residues include N123 and T173. K175 serves as the catalytic Proton acceptor. K177 is a substrate binding site. Mg(2+) contacts are provided by K201, D203, and E204. The residue at position 201 (K201) is an N6-carboxylysine. H294 serves as the catalytic Proton acceptor. The substrate site is built by R295, H327, and S379.

It belongs to the RuBisCO large chain family. Type I subfamily. In terms of assembly, heterohexadecamer of 8 large chains and 8 small chains; disulfide-linked. The disulfide link is formed within the large subunit homodimers. The cofactor is Mg(2+). The disulfide bond which can form in the large chain dimeric partners within the hexadecamer appears to be associated with oxidative stress and protein turnover.

It localises to the plastid. The protein localises to the chloroplast. It carries out the reaction 2 (2R)-3-phosphoglycerate + 2 H(+) = D-ribulose 1,5-bisphosphate + CO2 + H2O. The enzyme catalyses D-ribulose 1,5-bisphosphate + O2 = 2-phosphoglycolate + (2R)-3-phosphoglycerate + 2 H(+). Its function is as follows. RuBisCO catalyzes two reactions: the carboxylation of D-ribulose 1,5-bisphosphate, the primary event in carbon dioxide fixation, as well as the oxidative fragmentation of the pentose substrate in the photorespiration process. Both reactions occur simultaneously and in competition at the same active site. In Galium parisiense (Wall bedstraw), this protein is Ribulose bisphosphate carboxylase large chain.